A 274-amino-acid chain; its full sequence is Thiamine kinase (274 aa).

This sequence belongs to the thiamine kinase family.

It catalyses the reaction thiamine + ATP = thiamine phosphate + ADP + H(+). It functions in the pathway cofactor biosynthesis; thiamine diphosphate biosynthesis; thiamine phosphate from thiamine: step 1/1. Its function is as follows. Catalyzes the ATP-dependent phosphorylation of thiamine to thiamine phosphate. Is involved in thiamine salvage. This is Thiamine kinase from Salmonella heidelberg (strain SL476).